We begin with the raw amino-acid sequence, 145 residues long: D-aminoacyl-tRNA deacylase (145 aa).

Residues 137 to 138 carry the Gly-cisPro motif, important for rejection of L-amino acids motif; that stretch reads GP.

The protein belongs to the DTD family. As to quaternary structure, homodimer.

The protein resides in the cytoplasm. The enzyme catalyses glycyl-tRNA(Ala) + H2O = tRNA(Ala) + glycine + H(+). It catalyses the reaction a D-aminoacyl-tRNA + H2O = a tRNA + a D-alpha-amino acid + H(+). In terms of biological role, an aminoacyl-tRNA editing enzyme that deacylates mischarged D-aminoacyl-tRNAs. Also deacylates mischarged glycyl-tRNA(Ala), protecting cells against glycine mischarging by AlaRS. Acts via tRNA-based rather than protein-based catalysis; rejects L-amino acids rather than detecting D-amino acids in the active site. By recycling D-aminoacyl-tRNA to D-amino acids and free tRNA molecules, this enzyme counteracts the toxicity associated with the formation of D-aminoacyl-tRNA entities in vivo and helps enforce protein L-homochirality. The protein is D-aminoacyl-tRNA deacylase of Yersinia enterocolitica serotype O:8 / biotype 1B (strain NCTC 13174 / 8081).